Reading from the N-terminus, the 383-residue chain is Creatine kinase, testis isozyme (383 aa).

The 87-residue stretch at 14–100 (KRLSPEEEFP…LDPIIEDRHG (87 aa)) folds into the Phosphagen kinase N-terminal domain. Residues 99 to 112 (HGGYKPTDKHKTDL) show a composition bias toward basic and acidic residues. A disordered region spans residues 99-119 (HGGYKPTDKHKTDLNPDNLKG). The 243-residue stretch at 127–369 (YVISSRVRTG…KLLVEMEKKL (243 aa)) folds into the Phosphagen kinase C-terminal domain. Residues 130-134 (SSRVR), histidine 193, arginine 238, arginine 294, 322-327 (RGTGGV), and aspartate 337 contribute to the ATP site.

The protein belongs to the ATP:guanido phosphotransferase family. Exists in many tissues, but preferentially in testis.

The enzyme catalyses creatine + ATP = N-phosphocreatine + ADP + H(+). Reversibly catalyzes the transfer of phosphate between ATP and various phosphogens (e.g. creatine phosphate). Creatine kinase isoenzymes play a central role in energy transduction in tissues with large, fluctuating energy demands, such as skeletal muscle, heart, brain and spermatozoa. The protein is Creatine kinase, testis isozyme (tck1) of Oncorhynchus mykiss (Rainbow trout).